The chain runs to 143 residues: Large ribosomal subunit protein uL11 (143 aa).

This sequence belongs to the universal ribosomal protein uL11 family. In terms of assembly, part of the ribosomal stalk of the 50S ribosomal subunit. Interacts with L10 and the large rRNA to form the base of the stalk. L10 forms an elongated spine to which L12 dimers bind in a sequential fashion forming a multimeric L10(L12)X complex. Post-translationally, one or more lysine residues are methylated.

Its function is as follows. Forms part of the ribosomal stalk which helps the ribosome interact with GTP-bound translation factors. The protein is Large ribosomal subunit protein uL11 of Janthinobacterium sp. (strain Marseille) (Minibacterium massiliensis).